The primary structure comprises 416 residues: Gamma-glutamyl phosphate reductase (416 aa).

This sequence belongs to the gamma-glutamyl phosphate reductase family.

Its subcellular location is the cytoplasm. The catalysed reaction is L-glutamate 5-semialdehyde + phosphate + NADP(+) = L-glutamyl 5-phosphate + NADPH + H(+). It functions in the pathway amino-acid biosynthesis; L-proline biosynthesis; L-glutamate 5-semialdehyde from L-glutamate: step 2/2. In terms of biological role, catalyzes the NADPH-dependent reduction of L-glutamate 5-phosphate into L-glutamate 5-semialdehyde and phosphate. The product spontaneously undergoes cyclization to form 1-pyrroline-5-carboxylate. This chain is Gamma-glutamyl phosphate reductase, found in Salmonella paratyphi A (strain AKU_12601).